Reading from the N-terminus, the 177-residue chain is ADP-ribosylation factor-like protein 17 (177 aa).

A lipid anchor (N-myristoyl glycine) is attached at Gly-2. GTP-binding positions include 24-31 (SLDTAGKT), 67-71 (DVGSH), and 125-128 (LPHS).

It belongs to the small GTPase superfamily. Arf family.

It is found in the golgi apparatus. Functionally, GTP-binding protein that functions as an allosteric activator of the cholera toxin catalytic subunit, an ADP-ribosyltransferase. Involved in protein trafficking; may modulate vesicle budding and uncoating within the Golgi apparatus. The protein is ADP-ribosylation factor-like protein 17 (ARL17A) of Homo sapiens (Human).